Consider the following 1006-residue polypeptide: Kinesin-like protein KIN-5C (1006 aa).

The region spanning 9 to 355 is the Kinesin motor domain; that stretch reads NVQVLLRCRP…LDYAHRAKNI (347 aa). 95 to 102 contributes to the ATP binding site; the sequence is GQTGTGKT. A coiled-coil region spans residues 371–522; it reads IKDLYGEIER…NASLFQKIAR (152 aa).

The protein belongs to the TRAFAC class myosin-kinesin ATPase superfamily. Kinesin family. KIN-5/BimC subfamily.

It localises to the cytoplasm. It is found in the cytoskeleton. Its subcellular location is the spindle. Functionally, responsible for microtubule translocation. May be important for the organization of phragmoplast-specific arrays of microtubules. Plays an essential role in stabilizing the mitotic spindle. Required during mitotic cytokinesis. This is Kinesin-like protein KIN-5C from Nicotiana tabacum (Common tobacco).